The sequence spans 212 residues: Cyclin-dependent kinase 2-interacting protein (212 aa).

Methionine 1 carries the N-acetylmethionine modification. Residues serine 69 and serine 73 each carry the phosphoserine modification. Residues 73–107 adopt a coiled-coil conformation; sequence SKENEEKVCLEYNEELEKLCEELQATLDGLTKIQV. Position 202 (serine 202) interacts with Na(+).

The protein belongs to the CINP family. In terms of assembly, homodimer. Part of the 55LCC heterohexameric ATPase complex composed at least of AIRIM, AFG2A, AFG2B and CINP. Interacts with AIRIM. Interacts with CDK2 and CDC7. Interacts with the components of the replication complex, MCM2, MCM3, MCM4, MCM5, MCM6, MCM7 and with ORC2-containing complexes. Interacts with ATRIP. Interacts with CEP152. Associates with pre-60S ribosomal particles. In terms of processing, phosphorylated by CDC7 but not by CDK2.

Its subcellular location is the nucleus. Component of the DNA replication complex, which interacts with two kinases, CDK2 and CDC7, thereby providing a functional and physical link between CDK2 and CDC7 during firing of the origins of replication. Regulates ATR-mediated checkpoint signaling in response to DNA damage. Part of the 55LCC heterohexameric ATPase complex which is chromatin-associated and promotes replisome proteostasis to maintain replication fork progression and genome stability. Required for replication fork progression, sister chromatid cohesion, and chromosome stability. The ATPase activity is specifically enhanced by replication fork DNA and is coupled to cysteine protease-dependent cleavage of replisome substrates in response to replication fork damage. Uses ATPase activity to process replisome substrates in S-phase, facilitating their proteolytic turnover from chromatin to ensure DNA replication and mitotic fidelity. As part of 55LCC complex, also involved in the cytoplasmic maturation steps of pre-60S ribosomal particles by promoting the release of shuttling protein RSL24D1/RLP24 from the pre-ribosomal particles. This chain is Cyclin-dependent kinase 2-interacting protein, found in Homo sapiens (Human).